The following is an 83-amino-acid chain: Cytochrome b559 subunit alpha (83 aa).

A helical membrane pass occupies residues 21–35 (VIHSITIPSLFIAGW). Heme is bound at residue His-23.

The protein belongs to the PsbE/PsbF family. Heterodimer of an alpha subunit and a beta subunit. PSII is composed of 1 copy each of membrane proteins PsbA, PsbB, PsbC, PsbD, PsbE, PsbF, PsbH, PsbI, PsbJ, PsbK, PsbL, PsbM, PsbT, PsbX, PsbY, PsbZ, Psb30/Ycf12, at least 3 peripheral proteins of the oxygen-evolving complex and a large number of cofactors. It forms dimeric complexes. The cofactor is heme b.

It is found in the plastid. Its subcellular location is the chloroplast thylakoid membrane. Functionally, this b-type cytochrome is tightly associated with the reaction center of photosystem II (PSII). PSII is a light-driven water:plastoquinone oxidoreductase that uses light energy to abstract electrons from H(2)O, generating O(2) and a proton gradient subsequently used for ATP formation. It consists of a core antenna complex that captures photons, and an electron transfer chain that converts photonic excitation into a charge separation. The sequence is that of Cytochrome b559 subunit alpha from Zygnema circumcarinatum (Green alga).